Consider the following 231-residue polypeptide: Large ribosomal subunit protein uL1 (231 aa).

The protein belongs to the universal ribosomal protein uL1 family. As to quaternary structure, part of the 50S ribosomal subunit.

Functionally, binds directly to 23S rRNA. The L1 stalk is quite mobile in the ribosome, and is involved in E site tRNA release. In terms of biological role, protein L1 is also a translational repressor protein, it controls the translation of the L11 operon by binding to its mRNA. The sequence is that of Large ribosomal subunit protein uL1 from Pseudomonas savastanoi pv. phaseolicola (strain 1448A / Race 6) (Pseudomonas syringae pv. phaseolicola (strain 1448A / Race 6)).